A 302-amino-acid chain; its full sequence is RNA polymerase II holoenzyme cyclin-like subunit (302 aa).

Residues 53 to 142 (QQLIKLGKRM…VGECEFSLIS (90 aa)) form the Cyclin N-terminal domain.

It belongs to the cyclin family. Cyclin C subfamily. As to quaternary structure, component of the srb8-11 complex, a regulatory module of the Mediator complex.

The protein localises to the nucleus. In terms of biological role, component of the srb8-11 complex. The srb8-11 complex is a regulatory module of the Mediator complex which is itself involved in regulation of basal and activated RNA polymerase II-dependent transcription. The srb8-11 complex may be involved in the transcriptional repression of a subset of genes regulated by Mediator. It may inhibit the association of the Mediator complex with RNA polymerase II to form the holoenzyme complex. The srb8-11 complex phosphorylates the C-terminal domain (CTD) of the largest subunit of RNA polymerase II. The polypeptide is RNA polymerase II holoenzyme cyclin-like subunit (ssn8) (Emericella nidulans (strain FGSC A4 / ATCC 38163 / CBS 112.46 / NRRL 194 / M139) (Aspergillus nidulans)).